The primary structure comprises 142 residues: Large ribosomal subunit protein uL13 (142 aa).

The protein belongs to the universal ribosomal protein uL13 family. Part of the 50S ribosomal subunit.

Its function is as follows. This protein is one of the early assembly proteins of the 50S ribosomal subunit, although it is not seen to bind rRNA by itself. It is important during the early stages of 50S assembly. In Shewanella baltica (strain OS185), this protein is Large ribosomal subunit protein uL13.